The primary structure comprises 186 residues: Single-stranded DNA-binding protein 1 (186 aa).

An SSB domain is found at 1–108; sequence MDATVTVVGN…LEIDEIGPTL (108 aa). The segment at 119 to 186 is disordered; the sequence is TQAGHGVSPD…EDFDSDEVPF (68 aa). Over residues 175–186 the composition is skewed to acidic residues; the sequence is SYEDFDSDEVPF.

In terms of assembly, homotetramer.

This is Single-stranded DNA-binding protein 1 (ssb1) from Tropheryma whipplei (strain Twist) (Whipple's bacillus).